Consider the following 317-residue polypeptide: USG-1 protein homolog (317 aa).

It belongs to the aspartate-semialdehyde dehydrogenase family.

This is USG-1 protein homolog (usg) from Haemophilus influenzae (strain ATCC 51907 / DSM 11121 / KW20 / Rd).